The primary structure comprises 601 residues: Glutamyl-tRNA(Gln) amidotransferase subunit B, mitochondrial (601 aa).

The N-terminal 52 residues, 1 to 52, are a transit peptide targeting the mitochondrion; that stretch reads MLQQWLRQSPGAARFLRGSCCRGPQSGSLRHSPLPTAPHRCIRSLQTSATES.

This sequence belongs to the GatB/GatE family. GatB subfamily. As to quaternary structure, subunit of the heterotrimeric GatCAB amidotransferase (AdT) complex, composed of A, B and C subunits.

The protein resides in the mitochondrion. The enzyme catalyses L-glutamyl-tRNA(Gln) + L-glutamine + ATP + H2O = L-glutaminyl-tRNA(Gln) + L-glutamate + ADP + phosphate + H(+). Allows the formation of correctly charged Gln-tRNA(Gln) through the transamidation of misacylated Glu-tRNA(Gln) in the mitochondria. The reaction takes place in the presence of glutamine and ATP through an activated gamma-phospho-Glu-tRNA(Gln). The protein is Glutamyl-tRNA(Gln) amidotransferase subunit B, mitochondrial of Neosartorya fischeri (strain ATCC 1020 / DSM 3700 / CBS 544.65 / FGSC A1164 / JCM 1740 / NRRL 181 / WB 181) (Aspergillus fischerianus).